We begin with the raw amino-acid sequence, 116 residues long: Endoribonuclease toxin ChpB (116 aa).

It belongs to the PemK/MazF family. In terms of assembly, homodimer, interacts with ChpS, which inhibits the endoribonuclease activity.

With respect to regulation, stimulated in vitro in a concentration-dependent fashion by extracellular death factor (EDF, a quorum sensing pentapeptide sequence NNWNN, probably produced from the zwf gene product glucose-6-phosphate 1-dehydrogenase), which is able to overcome inhibition by cognate antitoxin ChpS. Toxic component of a type II toxin-antitoxin (TA) system. ChpB is a sequence-specific mRNA and (weak) tmRNA endoribonuclease that inhibits protein synthesis and induces bacterial stasis. Cleavage is independent of the ribosome. Cleavage occurs at ACY sequences where Y is not C. The endoribonuclease activity is not as strong as that of MazF. The endoribonuclease activity (a toxin) is inhibited by its labile cognate antitoxin ChpS. Toxicity results when the levels of ChpS decrease in the cell, leading to mRNA degradation. Both ChpS and ChpB probably bind to the promoter region of the chpS-chpB operon to autoregulate their synthesis. The sequence is that of Endoribonuclease toxin ChpB (chpB) from Escherichia coli (strain K12).